Reading from the N-terminus, the 560-residue chain is DNA ligase B (560 aa).

The active-site N6-AMP-lysine intermediate is Lys-124.

This sequence belongs to the NAD-dependent DNA ligase family. LigB subfamily.

It carries out the reaction NAD(+) + (deoxyribonucleotide)n-3'-hydroxyl + 5'-phospho-(deoxyribonucleotide)m = (deoxyribonucleotide)n+m + AMP + beta-nicotinamide D-nucleotide.. In terms of biological role, catalyzes the formation of phosphodiester linkages between 5'-phosphoryl and 3'-hydroxyl groups in double-stranded DNA using NAD as a coenzyme and as the energy source for the reaction. This is DNA ligase B from Escherichia coli O6:K15:H31 (strain 536 / UPEC).